The sequence spans 219 residues: uncharacterized protein (219 aa).

The signal sequence occupies residues 1–26 (MNDRGVPNSRTGPSLLALLPAANSYA). 2 disordered regions span residues 36–57 (AVGVGGGSYKSPTRGSPGTRGG) and 88–219 (SGLG…GLCE). Positions 127-173 (LSPPSALGSSPAGRGRPAPAIAAAKSSPLSASAAPGRCGARPRAPSR) are enriched in low complexity. A compositionally biased stretch (basic residues) spans 176–202 (RERRPRGNPRAPLRRGARGRRRSHTRG).

This is an uncharacterized protein from Gallid herpesvirus 2 (strain Chicken/Md5/ATCC VR-987) (GaHV-2).